A 237-amino-acid chain; its full sequence is DNA repair protein RecO (237 aa).

This sequence belongs to the RecO family.

In terms of biological role, involved in DNA repair and RecF pathway recombination. The protein is DNA repair protein RecO of Rickettsia rickettsii (strain Iowa).